Here is a 126-residue protein sequence, read N- to C-terminus: Large ribosomal subunit protein bL12 (126 aa).

It belongs to the bacterial ribosomal protein bL12 family. In terms of assembly, homodimer. Part of the ribosomal stalk of the 50S ribosomal subunit. Forms a multimeric L10(L12)X complex, where L10 forms an elongated spine to which 2 to 4 L12 dimers bind in a sequential fashion. Binds GTP-bound translation factors.

Its function is as follows. Forms part of the ribosomal stalk which helps the ribosome interact with GTP-bound translation factors. Is thus essential for accurate translation. The protein is Large ribosomal subunit protein bL12 of Rhizorhabdus wittichii (strain DSM 6014 / CCUG 31198 / JCM 15750 / NBRC 105917 / EY 4224 / RW1) (Sphingomonas wittichii).